Here is a 92-residue protein sequence, read N- to C-terminus: UPF0250 protein VP0718 (92 aa).

It belongs to the UPF0250 family.

The polypeptide is UPF0250 protein VP0718 (Vibrio parahaemolyticus serotype O3:K6 (strain RIMD 2210633)).